The sequence spans 1516 residues: Neurite extension and migration factor (1516 aa).

Residues 380–405 (LDKKKGKEEGQEDKGVEKKDGKDNGE) are compositionally biased toward basic and acidic residues. Disordered regions lie at residues 380-440 (LDKK…GSFS), 589-610 (QKKK…SQKQ), 1158-1225 (TFND…STKK), 1373-1419 (TPQE…PGYN), and 1437-1479 (LGNN…ESGT). Composition is skewed to polar residues over residues 596–610 (NTNT…SQKQ), 1158–1170 (TFND…STNN), and 1185–1194 (GAMNQSSSQK). Over residues 1443-1453 (THKKLYRHKSS) the composition is skewed to basic residues. The span at 1456-1479 (ALRDEKCKGKHMEREQVHKDESGT) shows a compositional bias: basic and acidic residues.

As to expression, highly expressed in fetal and adult brain, predominantly in the cerebral cortex and the cerebellum. Also expressed in other tissues but to a lesser extent.

The protein localises to the nucleus. The protein resides in the cytoplasm. Functionally, involved in neurite outgrowth by regulating cell-cell adhesion via the N-cadherin signaling pathway. May act by regulating expression of protein-coding genes, such as N-cadherins and integrin beta-1 (ITGB1). This chain is Neurite extension and migration factor, found in Homo sapiens (Human).